Here is a 338-residue protein sequence, read N- to C-terminus: Ketol-acid reductoisomerase (NADP(+)) (338 aa).

The region spanning 1 to 181 is the KARI N-terminal Rossmann domain; the sequence is MKVFYDKDCD…GGGRAGIIET (181 aa). NADP(+) contacts are provided by residues 24–27, R47, and S52; that span reads YGSQ. Residue H107 is part of the active site. G133 contributes to the NADP(+) binding site. The KARI C-terminal knotted domain maps to 182–327; the sequence is NFREETETDL…GKLRAMMPWI (146 aa). Residues D190, E194, E226, and E230 each coordinate Mg(2+). S251 contributes to the substrate binding site.

Belongs to the ketol-acid reductoisomerase family. It depends on Mg(2+) as a cofactor.

It catalyses the reaction (2R)-2,3-dihydroxy-3-methylbutanoate + NADP(+) = (2S)-2-acetolactate + NADPH + H(+). It carries out the reaction (2R,3R)-2,3-dihydroxy-3-methylpentanoate + NADP(+) = (S)-2-ethyl-2-hydroxy-3-oxobutanoate + NADPH + H(+). It participates in amino-acid biosynthesis; L-isoleucine biosynthesis; L-isoleucine from 2-oxobutanoate: step 2/4. Its pathway is amino-acid biosynthesis; L-valine biosynthesis; L-valine from pyruvate: step 2/4. Functionally, involved in the biosynthesis of branched-chain amino acids (BCAA). Catalyzes an alkyl-migration followed by a ketol-acid reduction of (S)-2-acetolactate (S2AL) to yield (R)-2,3-dihydroxy-isovalerate. In the isomerase reaction, S2AL is rearranged via a Mg-dependent methyl migration to produce 3-hydroxy-3-methyl-2-ketobutyrate (HMKB). In the reductase reaction, this 2-ketoacid undergoes a metal-dependent reduction by NADPH to yield (R)-2,3-dihydroxy-isovalerate. This chain is Ketol-acid reductoisomerase (NADP(+)), found in Bordetella pertussis (strain Tohama I / ATCC BAA-589 / NCTC 13251).